The following is a 424-amino-acid chain: UDP-N-acetylglucosamine 1-carboxyvinyltransferase (424 aa).

22–23 (KN) contributes to the phosphoenolpyruvate binding site. Arg-93 serves as a coordination point for UDP-N-acetyl-alpha-D-glucosamine. Cys-117 functions as the Proton donor in the catalytic mechanism. The residue at position 117 (Cys-117) is a 2-(S-cysteinyl)pyruvic acid O-phosphothioketal. UDP-N-acetyl-alpha-D-glucosamine contacts are provided by residues 162-165 (KVSV), Asp-307, and Ile-329.

The protein belongs to the EPSP synthase family. MurA subfamily.

It localises to the cytoplasm. It carries out the reaction phosphoenolpyruvate + UDP-N-acetyl-alpha-D-glucosamine = UDP-N-acetyl-3-O-(1-carboxyvinyl)-alpha-D-glucosamine + phosphate. The protein operates within cell wall biogenesis; peptidoglycan biosynthesis. Its function is as follows. Cell wall formation. Adds enolpyruvyl to UDP-N-acetylglucosamine. The polypeptide is UDP-N-acetylglucosamine 1-carboxyvinyltransferase (Glaesserella parasuis serovar 5 (strain SH0165) (Haemophilus parasuis)).